A 348-amino-acid chain; its full sequence is Bifunctional dihydroflavonol 4-reductase/flavanone 4-reductase (348 aa).

The NADP(+) site is built by K44 and Y163.

This sequence belongs to the NAD(P)-dependent epimerase/dehydratase family. Dihydroflavonol-4-reductase subfamily.

The catalysed reaction is a (2R,3S,4S)-leucoanthocyanidin + NADP(+) = a (2R,3R)-dihydroflavonol + NADPH + H(+). It catalyses the reaction (2S)-flavan-4-ol + NADP(+) = (2S)-flavanone + NADPH + H(+). In terms of biological role, bifunctional enzyme involved in flavonoid metabolism. May use dihydroquercetin, dihydrokaempferol, eriodictyol, garbanzol (5-deoxydihydrokaempferol), dihydrofisetin (5-deoxydihydroquercetin), naringenin to a low extent (10%), but not 5-deoxynaringenin or butin (5-deoxyeriodictyol) as substrate. This is Bifunctional dihydroflavonol 4-reductase/flavanone 4-reductase (DFR) from Malus domestica (Apple).